The following is a 346-amino-acid chain: Isopentenyl-diphosphate delta-isomerase (346 aa).

12-13 (RK) contacts substrate. FMN-binding positions include 67-69 (ALT), serine 97, and asparagine 126. 97–99 (SQR) serves as a coordination point for substrate. Glutamine 156 contributes to the substrate binding site. Position 157 (glutamate 157) interacts with Mg(2+). FMN contacts are provided by residues lysine 188, threonine 218, 263–265 (GIR), and 284–285 (AG).

Belongs to the IPP isomerase type 2 family. In terms of assembly, homooctamer. Dimer of tetramers. The cofactor is FMN. NADPH is required as a cofactor. It depends on Mg(2+) as a cofactor.

The protein localises to the cytoplasm. It catalyses the reaction isopentenyl diphosphate = dimethylallyl diphosphate. Involved in the biosynthesis of isoprenoids. Catalyzes the 1,3-allylic rearrangement of the homoallylic substrate isopentenyl (IPP) to its allylic isomer, dimethylallyl diphosphate (DMAPP). The chain is Isopentenyl-diphosphate delta-isomerase from Moorella thermoacetica (strain ATCC 39073 / JCM 9320).